The sequence spans 461 residues: Elongation factor 1-alpha (461 aa).

Position 2 is a n,N,N-trimethylglycine (Gly-2). Lys-3 bears the N6,N6-dimethyllysine; alternate mark. Lys-3 carries the N6-methyllysine; alternate modification. In terms of domain architecture, tr-type G spans 6-241 (KTHINVVVIG…DSIEPPKRPT (236 aa)). Residues 15 to 22 (GHVDSGKS) form a G1 region. Position 15–22 (15–22 (GHVDSGKS)) interacts with GTP. Residue Lys-31 is modified to N6-methyllysine. Residues 71 to 75 (GITID) are G2. An N6,N6,N6-trimethyllysine modification is found at Lys-80. Residues 92 to 95 (DAPG) are G3. Residues 92–96 (DAPGH) and 154–157 (NKMD) contribute to the GTP site. The segment at 154–157 (NKMD) is G4. Residues 193–195 (SGF) are G5. Lys-317 carries the post-translational modification N6,N6-dimethyllysine; alternate. Lys-317 is modified (N6-methyllysine; alternate). Lys-391 is subject to N6-methyllysine.

This sequence belongs to the TRAFAC class translation factor GTPase superfamily. Classic translation factor GTPase family. EF-Tu/EF-1A subfamily.

The protein resides in the cytoplasm. Its function is as follows. This protein promotes the GTP-dependent binding of aminoacyl-tRNA to the A-site of ribosomes during protein biosynthesis. The sequence is that of Elongation factor 1-alpha (TEF) from Pseudoechria curvicolla (Podospora curvicolla).